The primary structure comprises 164 residues: Lipocalin-like 1 protein (164 aa).

This sequence belongs to the calycin superfamily. Lipocalin family.

The sequence is that of Lipocalin-like 1 protein (LCNL1) from Homo sapiens (Human).